The chain runs to 187 residues: KS71A fimbrillin (187 aa).

Positions 1–21 are cleaved as a signal peptide; sequence MIKSVIAGAVAMAVVSFGANA. The cysteines at positions 43 and 82 are disulfide-linked.

This sequence belongs to the fimbrial protein family.

Its subcellular location is the fimbrium. In terms of biological role, fimbriae (also called pili), polar filaments radiating from the surface of the bacterium to a length of 0.5-1.5 micrometers and numbering 100-300 per cell, enable bacteria to colonize the epithelium of specific host organs. In Escherichia coli, this protein is KS71A fimbrillin (KS71A).